The chain runs to 376 residues: Erythronate-4-phosphate dehydrogenase (376 aa).

Substrate is bound by residues Ser-45 and Thr-67. An NAD(+)-binding site is contributed by Asp-147. Arg-209 is a catalytic residue. Asp-233 serves as a coordination point for NAD(+). Glu-238 is a catalytic residue. The Proton donor role is filled by His-255. Gly-258 serves as a coordination point for NAD(+). Tyr-259 contributes to the substrate binding site.

Belongs to the D-isomer specific 2-hydroxyacid dehydrogenase family. PdxB subfamily. Homodimer.

The protein resides in the cytoplasm. It catalyses the reaction 4-phospho-D-erythronate + NAD(+) = (R)-3-hydroxy-2-oxo-4-phosphooxybutanoate + NADH + H(+). It functions in the pathway cofactor biosynthesis; pyridoxine 5'-phosphate biosynthesis; pyridoxine 5'-phosphate from D-erythrose 4-phosphate: step 2/5. Its function is as follows. Catalyzes the oxidation of erythronate-4-phosphate to 3-hydroxy-2-oxo-4-phosphonooxybutanoate. The polypeptide is Erythronate-4-phosphate dehydrogenase (Shewanella halifaxensis (strain HAW-EB4)).